Here is a 392-residue protein sequence, read N- to C-terminus: Anhydro-N-acetylmuramic acid kinase (392 aa).

22–29 contributes to the ATP binding site; sequence GTSMDGVD.

The protein belongs to the anhydro-N-acetylmuramic acid kinase family.

It catalyses the reaction 1,6-anhydro-N-acetyl-beta-muramate + ATP + H2O = N-acetyl-D-muramate 6-phosphate + ADP + H(+). It functions in the pathway amino-sugar metabolism; 1,6-anhydro-N-acetylmuramate degradation. The protein operates within cell wall biogenesis; peptidoglycan recycling. Functionally, catalyzes the specific phosphorylation of 1,6-anhydro-N-acetylmuramic acid (anhMurNAc) with the simultaneous cleavage of the 1,6-anhydro ring, generating MurNAc-6-P. Is required for the utilization of anhMurNAc either imported from the medium or derived from its own cell wall murein, and thus plays a role in cell wall recycling. This chain is Anhydro-N-acetylmuramic acid kinase, found in Burkholderia pseudomallei (strain 1106a).